The sequence spans 119 residues: Ribonuclease P protein component (119 aa).

The protein belongs to the RnpA family. In terms of assembly, consists of a catalytic RNA component (M1 or rnpB) and a protein subunit.

The catalysed reaction is Endonucleolytic cleavage of RNA, removing 5'-extranucleotides from tRNA precursor.. Functionally, RNaseP catalyzes the removal of the 5'-leader sequence from pre-tRNA to produce the mature 5'-terminus. It can also cleave other RNA substrates such as 4.5S RNA. The protein component plays an auxiliary but essential role in vivo by binding to the 5'-leader sequence and broadening the substrate specificity of the ribozyme. The sequence is that of Ribonuclease P protein component from Aeromonas hydrophila subsp. hydrophila (strain ATCC 7966 / DSM 30187 / BCRC 13018 / CCUG 14551 / JCM 1027 / KCTC 2358 / NCIMB 9240 / NCTC 8049).